Reading from the N-terminus, the 427-residue chain is Glutamate-1-semialdehyde 2,1-aminomutase (427 aa).

At Lys-267 the chain carries N6-(pyridoxal phosphate)lysine.

The protein belongs to the class-III pyridoxal-phosphate-dependent aminotransferase family. HemL subfamily. Homodimer. Requires pyridoxal 5'-phosphate as cofactor.

It is found in the cytoplasm. The enzyme catalyses (S)-4-amino-5-oxopentanoate = 5-aminolevulinate. The protein operates within porphyrin-containing compound metabolism; protoporphyrin-IX biosynthesis; 5-aminolevulinate from L-glutamyl-tRNA(Glu): step 2/2. In Geobacter sulfurreducens (strain ATCC 51573 / DSM 12127 / PCA), this protein is Glutamate-1-semialdehyde 2,1-aminomutase.